The following is a 704-amino-acid chain: Elongation factor G (704 aa).

A tr-type G domain is found at asparagine 6–leucine 282. GTP is bound by residues alanine 15–threonine 22, aspartate 79–histidine 83, and asparagine 133–aspartate 136.

The protein belongs to the TRAFAC class translation factor GTPase superfamily. Classic translation factor GTPase family. EF-G/EF-2 subfamily.

The protein localises to the cytoplasm. In terms of biological role, catalyzes the GTP-dependent ribosomal translocation step during translation elongation. During this step, the ribosome changes from the pre-translocational (PRE) to the post-translocational (POST) state as the newly formed A-site-bound peptidyl-tRNA and P-site-bound deacylated tRNA move to the P and E sites, respectively. Catalyzes the coordinated movement of the two tRNA molecules, the mRNA and conformational changes in the ribosome. The chain is Elongation factor G from Corynebacterium diphtheriae (strain ATCC 700971 / NCTC 13129 / Biotype gravis).